The chain runs to 221 residues: High frequency lysogenization protein HflD homolog (221 aa).

It belongs to the HflD family.

It is found in the cytoplasm. The protein resides in the cell inner membrane. This Acidithiobacillus ferrooxidans (strain ATCC 23270 / DSM 14882 / CIP 104768 / NCIMB 8455) (Ferrobacillus ferrooxidans (strain ATCC 23270)) protein is High frequency lysogenization protein HflD homolog.